A 265-amino-acid chain; its full sequence is Hemin import ATP-binding protein HmuV (265 aa).

The ABC transporter domain occupies 10–247 (LVARHLRFQT…ETLAHWYRAD (238 aa)). 42-49 (GPNGAGKS) serves as a coordination point for ATP.

Belongs to the ABC transporter superfamily. Heme (hemin) importer (TC 3.A.1.14.5) family. The complex is composed of two ATP-binding proteins (HmuV), two transmembrane proteins (HmuU) and a solute-binding protein (HmuT).

The protein resides in the cell inner membrane. Its function is as follows. Part of the ABC transporter complex HmuTUV involved in hemin import. Responsible for energy coupling to the transport system. The sequence is that of Hemin import ATP-binding protein HmuV from Pectobacterium atrosepticum (strain SCRI 1043 / ATCC BAA-672) (Erwinia carotovora subsp. atroseptica).